Consider the following 495-residue polypeptide: Ribitol 5-phosphate transferase FKRP (495 aa).

The Cytoplasmic portion of the chain corresponds to 1–6; the sequence is MRLTRC. Residues 7–29 form a helical membrane-spanning segment; sequence QAALAAAITLNLLVLFYVSWLQH. The Lumenal portion of the chain corresponds to 30–495; it reads QPRNSRARGP…PALLSLTGSG (466 aa). Cys168 and Cys191 form a disulfide bridge. 2 N-linked (GlcNAc...) asparagine glycosylation sites follow: Asn172 and Asn209. Residues Cys289, Cys296, Cys317, and Cys318 each contribute to the Zn(2+) site. The interval 289–318 is zinc finger loop; sequence CNKETTRCFGTVVGDTPAYLYEERWTPPCC. CDP-L-ribitol contacts are provided by residues Gly345, Arg352, 359-364, 437-438, and 480-482; these read WDYDVD, QD, and NPQ. Mg(2+)-binding residues include Asp360, Asp362, and Asp364.

The protein belongs to the LicD transferase family. As to quaternary structure, homodimer; disulfide-linked. Tetramer. Forms a complex composed of FKRP, FKTN/fukutin, and RXYLT1/TMEM5. Also exists as large multimeric protein complexes. May interact with the dystrophin-glycoprotein complex (DGC). Requires Mg(2+) as cofactor. Post-translationally, N-glycosylated. In terms of tissue distribution, expressed in the retina (at protein level). Expressed predominantly in skeletal muscle, placenta, and heart and relatively weakly in brain, lung, liver, kidney, and pancreas.

The protein localises to the golgi apparatus membrane. It localises to the secreted. The protein resides in the cell membrane. Its subcellular location is the sarcolemma. It is found in the rough endoplasmic reticulum. The protein localises to the cytoplasm. It carries out the reaction 3-O-[Rib-ol-P-3-beta-D-GalNAc-(1-&gt;3)-beta-D-GlcNAc-(1-&gt;4)-(O-6-P-alpha-D-Man)]-Thr-[protein] + CDP-L-ribitol = 3-O-[Rib-ol-P-Rib-ol-P-3-beta-D-GalNAc-(1-&gt;3)-beta-D-GlcNAc-(1-&gt;4)-(O-6-P-alpha-D-Man)]-Thr-[protein] + CMP + H(+). The protein operates within protein modification; protein glycosylation. Functionally, catalyzes the transfer of a ribitol 5-phosphate from CDP-L-ribitol to the ribitol 5-phosphate previously attached by FKTN/fukutin to the phosphorylated O-mannosyl trisaccharide (N-acetylgalactosamine-beta-3-N-acetylglucosamine-beta-4-(phosphate-6-)mannose), a carbohydrate structure present in alpha-dystroglycan (DAG1). This constitutes the second step in the formation of the ribose 5-phosphate tandem repeat which links the phosphorylated O-mannosyl trisaccharide to the ligand binding moiety composed of repeats of 3-xylosyl-alpha-1,3-glucuronic acid-beta-1. This is Ribitol 5-phosphate transferase FKRP from Homo sapiens (Human).